The sequence spans 539 residues: MAKMIAFDEAARRALERGMNQLADAVKVTLGPKGRNVVLEKKWGAPTITNDGVSIAKEIELEDPYEKIGAELVKEVAKKTDDVAGDGTTTATVLAQTLVREGLRNVAAGANPMALKRGIEAATERVCQALLEIAKDVETREQIASTASISAGDTAVGEMIAEAMDKVGKEGVITVEESNTFGLELELTEGMRFDKGYISPYFVTDSERMEAVLEDPYILIANQKISAVKDLLPVLEKVMQAGKPLAIIAEDVEGEALATLVVNKIRGTFRSVAVKAPGFGDRRKAMLGDIAVLTGGQVISEEVGLKLENVGLDLLGRARKVVVTKDETTIVEGAGDPEQIAGRVNQIRAEIEKTDSDYDREKLQERLAKLAGGVAVIKVGAATEVELKERKHRIEDAVRNAKAAVEEGIVAGGGVALLQAGKTAFEKLDLEGDEATGARIVELALEAPLKQIAINAGLEGGVVVEKVRSLEPGWGLNAQTGEYVDMIKAGIIDPAKVTRSALQNAASIAGLFLTTEAVVAEKPEKEKTPAAPGGGDMDF.

Residues 29 to 32 (TLGP), 86 to 90 (DGTTT), Gly-413, and Asp-493 each bind ATP.

The protein belongs to the chaperonin (HSP60) family. Forms a cylinder of 14 subunits composed of two heptameric rings stacked back-to-back. Interacts with the co-chaperonin GroES.

Its subcellular location is the cytoplasm. The catalysed reaction is ATP + H2O + a folded polypeptide = ADP + phosphate + an unfolded polypeptide.. Together with its co-chaperonin GroES, plays an essential role in assisting protein folding. The GroEL-GroES system forms a nano-cage that allows encapsulation of the non-native substrate proteins and provides a physical environment optimized to promote and accelerate protein folding. The chain is Chaperonin GroEL 1 from Acidothermus cellulolyticus (strain ATCC 43068 / DSM 8971 / 11B).